Here is a 200-residue protein sequence, read N- to C-terminus: Neutrophil gelatinase-associated lipocalin (200 aa).

Residues 1-20 (MALSVMCLGLALLGVLQSQA) form the signal peptide. At Gln21 the chain carries Pyrrolidone carboxylic acid. 72–74 (YST) is a binding site for a carboxymycobactin. N-linked (GlcNAc...) asparagine glycosylation is found at Asn81 and Asn85. Cys98 and Cys197 are oxidised to a cystine. An enterobactin-binding site is contributed by Tyr128. Lys147, Lys156, and Tyr160 together coordinate a carboxymycobactin. Residue Lys156 participates in enterobactin binding.

The protein belongs to the calycin superfamily. Lipocalin family. As to quaternary structure, monomer. Homodimer; disulfide-linked. Heterodimer; disulfide-linked with MMP9. In terms of processing, N-glycosylated. In terms of tissue distribution, expressed in the cortical tubules of the kidney (at protein level). Also expressed in the medullary tubules of the kidney. Detected in lung, spleen, uterus, vagina and epididymis.

Its subcellular location is the secreted. It localises to the cytoplasmic granule lumen. It is found in the cytoplasmic vesicle lumen. Its function is as follows. Iron-trafficking protein involved in multiple processes such as apoptosis, innate immunity and renal development. Binds iron through association with 2,3-dihydroxybenzoic acid (2,3-DHBA), a siderophore that shares structural similarities with bacterial enterobactin, and delivers or removes iron from the cell, depending on the context. Iron-bound form (holo-24p3) is internalized following binding to the SLC22A17 (24p3R) receptor, leading to release of iron and subsequent increase of intracellular iron concentration. In contrast, association of the iron-free form (apo-24p3) with the SLC22A17 (24p3R) receptor is followed by association with an intracellular siderophore, iron chelation and iron transfer to the extracellular medium, thereby reducing intracellular iron concentration. Involved in apoptosis due to interleukin-3 (IL3) deprivation: iron-loaded form increases intracellular iron concentration without promoting apoptosis, while iron-free form decreases intracellular iron levels, inducing expression of the proapoptotic protein BCL2L11/BIM, resulting in apoptosis. Involved in innate immunity; limits bacterial proliferation by sequestering iron bound to microbial siderophores, such as enterobactin. Can also bind siderophores from M.tuberculosis. The chain is Neutrophil gelatinase-associated lipocalin (Lcn2) from Mus musculus (Mouse).